A 384-amino-acid polypeptide reads, in one-letter code: S-adenosylmethionine synthase (384 aa).

His15 serves as a coordination point for ATP. Asp17 serves as a coordination point for Mg(2+). Glu43 serves as a coordination point for K(+). L-methionine contacts are provided by Glu56 and Gln99. The tract at residues 99-109 (QSPDINQGVDR) is flexible loop. ATP-binding positions include 164–166 (DAK), 230–231 (RF), Asp239, 245–246 (RK), Ala262, and Lys266. Asp239 lines the L-methionine pocket. Position 270 (Lys270) interacts with L-methionine.

The protein belongs to the AdoMet synthase family. In terms of assembly, homotetramer; dimer of dimers. The cofactor is Mg(2+). Requires K(+) as cofactor.

The protein resides in the cytoplasm. The catalysed reaction is L-methionine + ATP + H2O = S-adenosyl-L-methionine + phosphate + diphosphate. It participates in amino-acid biosynthesis; S-adenosyl-L-methionine biosynthesis; S-adenosyl-L-methionine from L-methionine: step 1/1. In terms of biological role, catalyzes the formation of S-adenosylmethionine (AdoMet) from methionine and ATP. The overall synthetic reaction is composed of two sequential steps, AdoMet formation and the subsequent tripolyphosphate hydrolysis which occurs prior to release of AdoMet from the enzyme. The polypeptide is S-adenosylmethionine synthase (Cronobacter sakazakii (strain ATCC BAA-894) (Enterobacter sakazakii)).